The sequence spans 473 residues: Ribulose bisphosphate carboxylase large chain (473 aa).

The substrate site is built by asparagine 116 and threonine 166. The Proton acceptor role is filled by lysine 168. Lysine 170 is a substrate binding site. Residues lysine 194, aspartate 196, and glutamate 197 each coordinate Mg(2+). At lysine 194 the chain carries N6-carboxylysine. Histidine 287 serves as the catalytic Proton acceptor. Substrate is bound by residues arginine 288, histidine 320, and serine 372.

This sequence belongs to the RuBisCO large chain family. Type I subfamily. In terms of assembly, heterohexadecamer of 8 large chains and 8 small chains. The cofactor is Mg(2+).

It carries out the reaction 2 (2R)-3-phosphoglycerate + 2 H(+) = D-ribulose 1,5-bisphosphate + CO2 + H2O. The catalysed reaction is D-ribulose 1,5-bisphosphate + O2 = 2-phosphoglycolate + (2R)-3-phosphoglycerate + 2 H(+). Functionally, ruBisCO catalyzes two reactions: the carboxylation of D-ribulose 1,5-bisphosphate, the primary event in carbon dioxide fixation, as well as the oxidative fragmentation of the pentose substrate. Both reactions occur simultaneously and in competition at the same active site. This is Ribulose bisphosphate carboxylase large chain from Hydrogenophaga pseudoflava (Pseudomonas carboxydoflava).